A 254-amino-acid polypeptide reads, in one-letter code: 5'-nucleotidase SurE (254 aa).

Residues aspartate 8, aspartate 9, serine 40, and asparagine 93 each contribute to the a divalent metal cation site.

The protein belongs to the SurE nucleotidase family. It depends on a divalent metal cation as a cofactor.

It is found in the cytoplasm. It catalyses the reaction a ribonucleoside 5'-phosphate + H2O = a ribonucleoside + phosphate. Nucleotidase that shows phosphatase activity on nucleoside 5'-monophosphates. The polypeptide is 5'-nucleotidase SurE (Methylobacterium radiotolerans (strain ATCC 27329 / DSM 1819 / JCM 2831 / NBRC 15690 / NCIMB 10815 / 0-1)).